Here is a 618-residue protein sequence, read N- to C-terminus: Proline--tRNA ligase (618 aa).

This sequence belongs to the class-II aminoacyl-tRNA synthetase family. ProS type 1 subfamily. Homodimer.

It is found in the cytoplasm. It carries out the reaction tRNA(Pro) + L-proline + ATP = L-prolyl-tRNA(Pro) + AMP + diphosphate. Functionally, catalyzes the attachment of proline to tRNA(Pro) in a two-step reaction: proline is first activated by ATP to form Pro-AMP and then transferred to the acceptor end of tRNA(Pro). As ProRS can inadvertently accommodate and process non-cognate amino acids such as alanine and cysteine, to avoid such errors it has two additional distinct editing activities against alanine. One activity is designated as 'pretransfer' editing and involves the tRNA(Pro)-independent hydrolysis of activated Ala-AMP. The other activity is designated 'posttransfer' editing and involves deacylation of mischarged Ala-tRNA(Pro). The misacylated Cys-tRNA(Pro) is not edited by ProRS. The protein is Proline--tRNA ligase of Streptococcus uberis (strain ATCC BAA-854 / 0140J).